The chain runs to 263 residues: Endonuclease 8 (263 aa).

Catalysis depends on P2, which acts as the Schiff-base intermediate with DNA. Catalysis depends on E3, which acts as the Proton donor. Residue K53 is the Proton donor; for beta-elimination activity of the active site. DNA is bound by residues Q70, R125, and N169. The FPG-type zinc finger occupies 229–263; that stretch reads KVFHRDGEACERCGGIIEKTTLSSRPFYWCPHCQK. The active-site Proton donor; for delta-elimination activity is R253.

This sequence belongs to the FPG family. The cofactor is Zn(2+).

It carries out the reaction 2'-deoxyribonucleotide-(2'-deoxyribose 5'-phosphate)-2'-deoxyribonucleotide-DNA = a 3'-end 2'-deoxyribonucleotide-(2,3-dehydro-2,3-deoxyribose 5'-phosphate)-DNA + a 5'-end 5'-phospho-2'-deoxyribonucleoside-DNA + H(+). Functionally, involved in base excision repair of DNA damaged by oxidation or by mutagenic agents. Acts as a DNA glycosylase that recognizes and removes damaged bases. Has a preference for oxidized pyrimidines, such as thymine glycol, 5,6-dihydrouracil and 5,6-dihydrothymine. Has AP (apurinic/apyrimidinic) lyase activity and introduces nicks in the DNA strand. Cleaves the DNA backbone by beta-delta elimination to generate a single-strand break at the site of the removed base with both 3'- and 5'-phosphates. The polypeptide is Endonuclease 8 (Salmonella paratyphi B (strain ATCC BAA-1250 / SPB7)).